The sequence spans 83 residues: Hainantoxin-III 11 (83 aa).

The signal sequence occupies residues 1 to 21 (MKASMFLALAGLVLLFVVGYA). Residues 22-48 (SESEEKDFPRELLSKIFAVDDFKGEER) constitute a propeptide that is removed on maturation. 3 cysteine pairs are disulfide-bonded: C50/C65, C57/C70, and C64/C77. A Leucine amide modification is found at L81.

This sequence belongs to the neurotoxin 10 (Hwtx-1) family. 15 (Hntx-3) subfamily. Monomer. In terms of tissue distribution, expressed by the venom gland.

It is found in the secreted. In terms of biological role, selective antagonist of neuronal tetrodotoxin (TTX)-sensitive voltage-gated sodium channels (IC(50)=1270 nM on Nav1.1/SCN1A, 270 nM on Nav1.2/SCN2A, 491 nM on Nav1.3/SCN3A and 232 nM on Nav1.7/SCN9A). This toxin suppress Nav1.7 current amplitude without significantly altering the activation, inactivation, and repriming kinetics. Short extreme depolarizations partially activate the toxin-bound channel, indicating voltage-dependent inhibition of this toxin. This toxin increases the deactivation of the Nav1.7 current after extreme depolarizations. The toxin-Nav1.7 complex is gradually dissociated upon prolonged strong depolarizations in a voltage-dependent manner, and the unbound toxin rebinds to Nav1.7 after a long repolarization. Moreover, analysis of chimeric channels showed that the DIIS3-S4 linker is critical for toxin binding to Nav1.7. These data are consistent with this toxin interacting with Nav1.7 site 4 and trapping the domain II voltage sensor in the closed state. In Cyriopagopus hainanus (Chinese bird spider), this protein is Hainantoxin-III 11.